A 332-amino-acid polypeptide reads, in one-letter code: tRNA dimethylallyltransferase (332 aa).

17–24 (GPTCSGKS) contacts ATP. 19–24 (TCSGKS) is a binding site for substrate. Interaction with substrate tRNA regions lie at residues 42-45 (DSMQ) and 166-170 (QRVAR).

This sequence belongs to the IPP transferase family. As to quaternary structure, monomer. It depends on Mg(2+) as a cofactor.

It catalyses the reaction adenosine(37) in tRNA + dimethylallyl diphosphate = N(6)-dimethylallyladenosine(37) in tRNA + diphosphate. Its function is as follows. Catalyzes the transfer of a dimethylallyl group onto the adenine at position 37 in tRNAs that read codons beginning with uridine, leading to the formation of N6-(dimethylallyl)adenosine (i(6)A). The protein is tRNA dimethylallyltransferase of Gluconacetobacter diazotrophicus (strain ATCC 49037 / DSM 5601 / CCUG 37298 / CIP 103539 / LMG 7603 / PAl5).